Here is a 1081-residue protein sequence, read N- to C-terminus: Inversin (1081 aa).

ANK repeat units lie at residues 13–42, 47–76, 80–110, 113–144, 148–177, 181–213, 220–250, 254–283, 288–317, 321–350, 356–385, 389–418, 422–451, 455–484, 488–517, and 523–553; these read SLASQVHAAAINGDKGALHRLIIGNSALKD, FGRTPLMYCVLADRLDCADALLKAGADVNK, SQRTALHLAAQKGNYRFMKLLLTRRANWMQK, EEMTPLHLATRHKSPKCLALLLKFMAPGEVDT, NKQTALHWSAYYNNPEHVKLLIKHDSNIGI, EGKIPLHWAANHKDPSAVHTVRCILDAAPTESL, EGRTPLHFAVADGNVTVVDVLTSYESCNITS, LFRTPLHWAALLGHAQIVHLLLERNKSGTI, QGATPLHYAAQSNFAETVKVFLKHPSVKDD, EGRTSFMWAAGKGSDDVLRTMLSLKSDIDI, YGGTALHAAALSGHVSTVKLLLENNAQVDA, MKHTPLFRACEMGHKDVIQTLIKGGARVDL, DGHSLLHWAALGGNADVCQILIENKINPNV, AGRTPLQCAAYGGYINCMAVLMENNADPNI, EGRTALHWSCNNGYLDAIKLLLDFAAFPNQ, and ERYTPLDYALLGERHEVIQFMLEHGALSIAA. A 3-hydroxyasparagine modification is found at Asn75. Positions 490–498 match the D-box 1 motif; sequence RTALHWSCN. Positions 555–584 constitute an IQ 1 domain; it reads QDIAAFKIQAVYKGYKVRKAFRDRKNLLMK. The segment covering 589-610 has biased composition (basic and acidic residues); the sequence is RKDAAAKKREEENKRREAEQQK. Residues 589–889 form a disordered region; the sequence is RKDAAAKKRE…PAPGPLSGQS (301 aa). A compositionally biased stretch (polar residues) spans 638–649; the sequence is RAPSKQPPSSEA. 3 stretches are compositionally biased toward basic and acidic residues: residues 688 to 698, 724 to 740, and 772 to 785; these read KPNESPREQCK, EKSRSETGGEQRCDKGK, and DGHRKPSRRQDTAS. A compositionally biased stretch (polar residues) spans 863–872; it reads SGTSTLSEDA. The D-box 2 motif lies at 910 to 918; sequence RKELFRKKN. The IQ 2 domain occupies 917–946; it reads KNKAAAVIQRAWRSYQLRKHLSHLLHMKEL. The ANK 17 repeat unit spans residues 1022 to 1050; sequence RTHSVLHLNSVSNLQCIHLLENSGRSKNF. Positions 1051-1061 are enriched in polar residues; it reads SYNLQSATPPK. Residues 1051–1081 are disordered; the sequence is SYNLQSATPPKTKTKLRPSLEEECVRGSWNS.

Binds calmodulin via its IQ domains. Interacts with APC2. Interacts with alpha-, beta-, and gamma-catenin. Interacts with N-cadherin (CDH2). Interacts with NPHP1. Interacts with DVL1, PRICKLE (PRICKLE1 or PRICKLE2) and Strabismus (VANGL1 or VANGL2). Component of a complex containing at least ANKS6, INVS, NEK8 and NPHP3. ANKS6 may organize complex assembly by linking INVS and NPHP3 to NEK8 and INVS may target the complex to the proximal ciliary axoneme. Interacts with IQCB1; the interaction likely requires additional interactors. Interacts with microtubules. Post-translationally, may be ubiquitinated via its interaction with APC2. In terms of processing, hydroxylated at Asn-75, most probably by HIF1AN.

It localises to the cytoplasm. The protein localises to the cytoskeleton. It is found in the membrane. Its subcellular location is the spindle. The protein resides in the nucleus. Required for normal renal development and establishment of left-right axis. Probably acts as a molecular switch between different Wnt signaling pathways. Inhibits the canonical Wnt pathway by targeting cytoplasmic disheveled (DVL1) for degradation by the ubiquitin-proteasome. This suggests that it is required in renal development to oppose the repression of terminal differentiation of tubular epithelial cells by Wnt signaling. Involved in the organization of apical junctions in kidney cells together with NPHP1, NPHP4 and RPGRIP1L/NPHP8. Does not seem to be strictly required for ciliogenesis. This chain is Inversin (INVS), found in Canis lupus familiaris (Dog).